A 776-amino-acid chain; its full sequence is Protein translocase subunit SecA 2 (776 aa).

ATP-binding positions include Gln80, 98–102, and Asp486; that span reads GEGKT.

The protein belongs to the SecA family. Monomer and homodimer. Part of the essential Sec protein translocation apparatus which comprises SecA, SecYEG and auxiliary proteins SecDF. Other proteins may also be involved.

The protein resides in the cell membrane. It localises to the cytoplasm. It carries out the reaction ATP + H2O + cellular proteinSide 1 = ADP + phosphate + cellular proteinSide 2.. In terms of biological role, part of the Sec protein translocase complex. Interacts with the SecYEG preprotein conducting channel. Has a central role in coupling the hydrolysis of ATP to the transfer of proteins into and across the cell membrane, serving as an ATP-driven molecular motor driving the stepwise translocation of polypeptide chains across the membrane. The polypeptide is Protein translocase subunit SecA 2 (Listeria monocytogenes serotype 4b (strain F2365)).